The following is a 347-amino-acid chain: Anthranilate phosphoribosyltransferase (347 aa).

5-phospho-alpha-D-ribose 1-diphosphate contacts are provided by residues Gly88, Gly91–Asp92, Thr96, Asn98–Thr101, Lys116–Ser124, and Ser128. An anthranilate-binding site is contributed by Gly88. A Mg(2+)-binding site is contributed by Ser100. Asn119 contributes to the anthranilate binding site. Arg174 serves as a coordination point for anthranilate. Residues Asp233 and Glu234 each coordinate Mg(2+).

Belongs to the anthranilate phosphoribosyltransferase family. Homodimer. Mg(2+) serves as cofactor.

The enzyme catalyses N-(5-phospho-beta-D-ribosyl)anthranilate + diphosphate = 5-phospho-alpha-D-ribose 1-diphosphate + anthranilate. Its pathway is amino-acid biosynthesis; L-tryptophan biosynthesis; L-tryptophan from chorismate: step 2/5. In terms of biological role, catalyzes the transfer of the phosphoribosyl group of 5-phosphorylribose-1-pyrophosphate (PRPP) to anthranilate to yield N-(5'-phosphoribosyl)-anthranilate (PRA). The sequence is that of Anthranilate phosphoribosyltransferase from Rhodospirillum rubrum (strain ATCC 11170 / ATH 1.1.1 / DSM 467 / LMG 4362 / NCIMB 8255 / S1).